The sequence spans 70 residues: Large ribosomal subunit protein eL38 (70 aa).

It belongs to the eukaryotic ribosomal protein eL38 family.

The sequence is that of Large ribosomal subunit protein eL38 (rpl-38) from Ostertagia ostertagi (Brown stomach worm).